Here is a 740-residue protein sequence, read N- to C-terminus: Elongation factor 2 (740 aa).

Positions alanine 23 to asparagine 264 constitute a tr-type G domain. GTP-binding positions include alanine 32–threonine 39, aspartate 98–histidine 102, and asparagine 152–aspartate 155. Histidine 605 carries the diphthamide modification.

It belongs to the TRAFAC class translation factor GTPase superfamily. Classic translation factor GTPase family. EF-G/EF-2 subfamily.

It localises to the cytoplasm. In terms of biological role, catalyzes the GTP-dependent ribosomal translocation step during translation elongation. During this step, the ribosome changes from the pre-translocational (PRE) to the post-translocational (POST) state as the newly formed A-site-bound peptidyl-tRNA and P-site-bound deacylated tRNA move to the P and E sites, respectively. Catalyzes the coordinated movement of the two tRNA molecules, the mRNA and conformational changes in the ribosome. The chain is Elongation factor 2 from Pyrobaculum neutrophilum (strain DSM 2338 / JCM 9278 / NBRC 100436 / V24Sta) (Thermoproteus neutrophilus).